Here is a 318-residue protein sequence, read N- to C-terminus: 2-dehydro-3-deoxygalactonokinase (318 aa).

Substrate-binding positions include 35 to 39, Tyr-90, 105 to 107, and Arg-169; these read GAESN and YDR. ATP is bound by residues 167–169, 228–233, and 257–260; these read NYR, TRGEDG, and GTGD. Substrate is bound by residues Asp-260 and Asp-296. Asp-260 functions as the Proton acceptor in the catalytic mechanism.

This sequence belongs to the carbohydrate kinase PfkB family. Homohexamer.

The catalysed reaction is 2-dehydro-3-deoxy-D-galactonate + ATP = 2-dehydro-3-deoxy-6-phospho-D-galactonate + ADP + H(+). Its function is as follows. Involved in galactose catabolism. Catalyzes the phosphorylation of 2-keto-3-deoxygalactonate (KDGal) to produce 2-keto-3-deoxy-6-phosphogalactonate (KDPGal). Can also phosphorylate 2-keto-3-deoxygluconate (KDG) to 2-keto-3-deoxy-6-phosphogluconate (KDPG), but the catalytic efficiency for KDGal is 50-fold higher than for KDG. The sequence is that of 2-dehydro-3-deoxygalactonokinase from Haloferax volcanii (strain ATCC 29605 / DSM 3757 / JCM 8879 / NBRC 14742 / NCIMB 2012 / VKM B-1768 / DS2) (Halobacterium volcanii).